Consider the following 85-residue polypeptide: Probable Thioredoxin (85 aa).

Residues 2 to 85 form the Glutaredoxin domain; it reads VVNIEVFTSP…LFEAINDEME (84 aa). A disulfide bridge links Cys13 with Cys16.

The protein belongs to the glutaredoxin family.

Its subcellular location is the cytoplasm. Acts to maintain redox homeostasis; functions as a protein disulfide reductase. The protein is Probable Thioredoxin of Methanothermobacter thermautotrophicus (strain ATCC 29096 / DSM 1053 / JCM 10044 / NBRC 100330 / Delta H) (Methanobacterium thermoautotrophicum).